The sequence spans 337 residues: Phosphate acyltransferase (337 aa).

Belongs to the PlsX family. In terms of assembly, homodimer. Probably interacts with PlsY.

The protein localises to the cytoplasm. The enzyme catalyses a fatty acyl-[ACP] + phosphate = an acyl phosphate + holo-[ACP]. It functions in the pathway lipid metabolism; phospholipid metabolism. Catalyzes the reversible formation of acyl-phosphate (acyl-PO(4)) from acyl-[acyl-carrier-protein] (acyl-ACP). This enzyme utilizes acyl-ACP as fatty acyl donor, but not acyl-CoA. The chain is Phosphate acyltransferase from Listeria innocua serovar 6a (strain ATCC BAA-680 / CLIP 11262).